Reading from the N-terminus, the 547-residue chain is Chaperonin GroEL (547 aa).

Residues 30–33, Lys-51, 87–91, Gly-415, and Asp-495 contribute to the ATP site; these read TLGP and DGTTT.

It belongs to the chaperonin (HSP60) family. Forms a cylinder of 14 subunits composed of two heptameric rings stacked back-to-back. Interacts with the co-chaperonin GroES.

The protein localises to the cytoplasm. The catalysed reaction is ATP + H2O + a folded polypeptide = ADP + phosphate + an unfolded polypeptide.. Its function is as follows. Together with its co-chaperonin GroES, plays an essential role in assisting protein folding. The GroEL-GroES system forms a nano-cage that allows encapsulation of the non-native substrate proteins and provides a physical environment optimized to promote and accelerate protein folding. This is Chaperonin GroEL from Ralstonia nicotianae (strain ATCC BAA-1114 / GMI1000) (Ralstonia solanacearum).